Consider the following 141-residue polypeptide: HTH-type transcriptional repressor NsrR (141 aa).

Residues 2 to 129 (QLTSFTDYAL…DDCTIEELLS (128 aa)) form the HTH rrf2-type domain. The H-T-H motif DNA-binding region spans 28–51 (ITEVTDLFGVSRNHMVKVINRLGQ). [2Fe-2S] cluster is bound by residues cysteine 91, cysteine 96, and cysteine 102.

It depends on [2Fe-2S] cluster as a cofactor.

In terms of biological role, nitric oxide-sensitive repressor of genes involved in protecting the cell against nitrosative stress. May require iron for activity. This is HTH-type transcriptional repressor NsrR from Vibrio campbellii (strain ATCC BAA-1116).